A 283-amino-acid chain; its full sequence is NAD kinase (283 aa).

D68 functions as the Proton acceptor in the catalytic mechanism. NAD(+) contacts are provided by residues 68–69 (DG), 142–143 (ND), R153, D172, 183–188 (TAYSLS), and Q242.

Belongs to the NAD kinase family. It depends on a divalent metal cation as a cofactor.

It is found in the cytoplasm. It carries out the reaction NAD(+) + ATP = ADP + NADP(+) + H(+). Involved in the regulation of the intracellular balance of NAD and NADP, and is a key enzyme in the biosynthesis of NADP. Catalyzes specifically the phosphorylation on 2'-hydroxyl of the adenosine moiety of NAD to yield NADP. This is NAD kinase from Thermoanaerobacter pseudethanolicus (strain ATCC 33223 / 39E) (Clostridium thermohydrosulfuricum).